The chain runs to 804 residues: Ribonucleoside-diphosphate reductase large subunit-like protein (804 aa).

The protein belongs to the ribonucleoside diphosphate reductase large chain family. In terms of assembly, the genome of human herpesvirus-6 does not code for a ribonucleotide reductase small subunit.

The protein resides in the virion. Its subcellular location is the host cytoplasm. In terms of biological role, does not possess a ribonucleotide reductase activity. Betaherpesviruses probably use another strategy to expand the dNTP pool in a quiescent host cell. The protein is Ribonucleoside-diphosphate reductase large subunit-like protein of Human herpesvirus 6B (strain Z29) (HHV-6 variant B).